The primary structure comprises 869 residues: Leucine--tRNA ligase (869 aa).

The 'HIGH' region signature appears at 42–52 (PYPSGNLHMGH). Positions 622 to 626 (KMSKS) match the 'KMSKS' region motif. Lys625 contributes to the ATP binding site.

It belongs to the class-I aminoacyl-tRNA synthetase family.

Its subcellular location is the cytoplasm. The enzyme catalyses tRNA(Leu) + L-leucine + ATP = L-leucyl-tRNA(Leu) + AMP + diphosphate. The chain is Leucine--tRNA ligase from Synechocystis sp. (strain ATCC 27184 / PCC 6803 / Kazusa).